Here is a 204-residue protein sequence, read N- to C-terminus: Small ribosomal subunit protein uS4 (204 aa).

Residues Trp20–Asp46 are disordered. The span at Asn28–Gly38 shows a compositional bias: basic and acidic residues. Residues Thr93 to Leu156 enclose the S4 RNA-binding domain.

It belongs to the universal ribosomal protein uS4 family. In terms of assembly, part of the 30S ribosomal subunit. Contacts protein S5. The interaction surface between S4 and S5 is involved in control of translational fidelity.

Its function is as follows. One of the primary rRNA binding proteins, it binds directly to 16S rRNA where it nucleates assembly of the body of the 30S subunit. With S5 and S12 plays an important role in translational accuracy. The polypeptide is Small ribosomal subunit protein uS4 (Rhodospirillum rubrum (strain ATCC 11170 / ATH 1.1.1 / DSM 467 / LMG 4362 / NCIMB 8255 / S1)).